Consider the following 270-residue polypeptide: Methylthioribulose-1-phosphate dehydratase (270 aa).

Cysteine 122 is a substrate binding site. Residues histidine 140 and histidine 142 each contribute to the Zn(2+) site. The active-site Proton donor/acceptor is glutamate 165. Histidine 230 provides a ligand contact to Zn(2+).

This sequence belongs to the aldolase class II family. MtnB subfamily. Requires Zn(2+) as cofactor.

It is found in the cytoplasm. The enzyme catalyses 5-(methylsulfanyl)-D-ribulose 1-phosphate = 5-methylsulfanyl-2,3-dioxopentyl phosphate + H2O. The protein operates within amino-acid biosynthesis; L-methionine biosynthesis via salvage pathway; L-methionine from S-methyl-5-thio-alpha-D-ribose 1-phosphate: step 2/6. Catalyzes the dehydration of methylthioribulose-1-phosphate (MTRu-1-P) into 2,3-diketo-5-methylthiopentyl-1-phosphate (DK-MTP-1-P). This chain is Methylthioribulose-1-phosphate dehydratase, found in Candida albicans (strain WO-1) (Yeast).